The following is a 297-amino-acid chain: HTH-type transcriptional regulator PerR (297 aa).

An HTH lysR-type domain is found at 7–64 (APLNLLRAFEAAGRTGAFALAASELELSPSAISHAIRKLENLLDVRLFQRSTREITLT). Residues 24-44 (FALAASELELSPSAISHAIRK) constitute a DNA-binding region (H-T-H motif).

Belongs to the LysR transcriptional regulatory family.

Apparent regulatory gene involved in peroxide resistance in stationary phase. The protein is HTH-type transcriptional regulator PerR (perR) of Escherichia coli (strain K12).